The sequence spans 86 residues: Bacteriocin thailandicin (86 aa).

The cyclopeptide (Leu-Trp) cross-link spans 23–86 (LTANLGISSY…KYGAKYSAAW (64 aa)).

The protein localises to the secreted. In terms of biological role, cyclopeptide antibiotic with bacteriolytic activity against the Gram-positive bacteria S.aureus and S.thermophilus, and lower activity against the Gram-negative bacteria E.coli and P.aeruginosa. In Enterococcus thailandicus, this protein is Bacteriocin thailandicin.